Reading from the N-terminus, the 490-residue chain is UDP-N-acetylmuramoyl-L-alanyl-D-glutamate--2,6-diaminopimelate ligase (490 aa).

Residues L22, S24, and 39-41 (HQT) each bind UDP-N-acetyl-alpha-D-muramoyl-L-alanyl-D-glutamate. Position 111–117 (111–117 (GTNGKTT)) interacts with ATP. Residues N152, 153-154 (TT), S180, Q186, and R188 contribute to the UDP-N-acetyl-alpha-D-muramoyl-L-alanyl-D-glutamate site. N6-carboxylysine is present on K220. Residues R385, 409–412 (DNPR), G460, and E464 each bind meso-2,6-diaminopimelate. A Meso-diaminopimelate recognition motif motif is present at residues 409 to 412 (DNPR).

The protein belongs to the MurCDEF family. MurE subfamily. It depends on Mg(2+) as a cofactor. In terms of processing, carboxylation is probably crucial for Mg(2+) binding and, consequently, for the gamma-phosphate positioning of ATP.

It is found in the cytoplasm. The catalysed reaction is UDP-N-acetyl-alpha-D-muramoyl-L-alanyl-D-glutamate + meso-2,6-diaminopimelate + ATP = UDP-N-acetyl-alpha-D-muramoyl-L-alanyl-gamma-D-glutamyl-meso-2,6-diaminopimelate + ADP + phosphate + H(+). It participates in cell wall biogenesis; peptidoglycan biosynthesis. In terms of biological role, catalyzes the addition of meso-diaminopimelic acid to the nucleotide precursor UDP-N-acetylmuramoyl-L-alanyl-D-glutamate (UMAG) in the biosynthesis of bacterial cell-wall peptidoglycan. The sequence is that of UDP-N-acetylmuramoyl-L-alanyl-D-glutamate--2,6-diaminopimelate ligase from Yersinia pestis.